A 233-amino-acid polypeptide reads, in one-letter code: DNA repair protein RecO (233 aa).

It belongs to the RecO family.

Its function is as follows. Involved in DNA repair and RecF pathway recombination. The chain is DNA repair protein RecO from Psychromonas ingrahamii (strain DSM 17664 / CCUG 51855 / 37).